The sequence spans 362 residues: Histidinol-phosphate aminotransferase (362 aa).

Residue lysine 218 is modified to N6-(pyridoxal phosphate)lysine.

It belongs to the class-II pyridoxal-phosphate-dependent aminotransferase family. Histidinol-phosphate aminotransferase subfamily. In terms of assembly, homodimer. It depends on pyridoxal 5'-phosphate as a cofactor.

It carries out the reaction L-histidinol phosphate + 2-oxoglutarate = 3-(imidazol-4-yl)-2-oxopropyl phosphate + L-glutamate. It functions in the pathway amino-acid biosynthesis; L-histidine biosynthesis; L-histidine from 5-phospho-alpha-D-ribose 1-diphosphate: step 7/9. This is Histidinol-phosphate aminotransferase from Xanthomonas campestris pv. campestris (strain 8004).